Reading from the N-terminus, the 311-residue chain is tRNA-cytidine(32) 2-sulfurtransferase (311 aa).

The short motif at 58–63 (SGGKDS) is the PP-loop motif element. [4Fe-4S] cluster-binding residues include Cys-133, Cys-136, and Cys-224.

The protein belongs to the TtcA family. As to quaternary structure, homodimer. Mg(2+) is required as a cofactor. [4Fe-4S] cluster serves as cofactor.

Its subcellular location is the cytoplasm. The catalysed reaction is cytidine(32) in tRNA + S-sulfanyl-L-cysteinyl-[cysteine desulfurase] + AH2 + ATP = 2-thiocytidine(32) in tRNA + L-cysteinyl-[cysteine desulfurase] + A + AMP + diphosphate + H(+). Its pathway is tRNA modification. Catalyzes the ATP-dependent 2-thiolation of cytidine in position 32 of tRNA, to form 2-thiocytidine (s(2)C32). The sulfur atoms are provided by the cysteine/cysteine desulfurase (IscS) system. The polypeptide is tRNA-cytidine(32) 2-sulfurtransferase (Polaromonas sp. (strain JS666 / ATCC BAA-500)).